A 275-amino-acid chain; its full sequence is Exosome complex component Rrp42 (275 aa).

It belongs to the RNase PH family. Rrp42 subfamily. Component of the archaeal exosome complex. Forms a hexameric ring-like arrangement composed of 3 Rrp41-Rrp42 heterodimers. The hexameric ring associates with a trimer of Rrp4 and/or Csl4 subunits.

Its subcellular location is the cytoplasm. Functionally, non-catalytic component of the exosome, which is a complex involved in RNA degradation. Contributes to the structuring of the Rrp41 active site. This is Exosome complex component Rrp42 from Sulfurisphaera tokodaii (strain DSM 16993 / JCM 10545 / NBRC 100140 / 7) (Sulfolobus tokodaii).